The following is a 65-amino-acid chain: Large ribosomal subunit protein bL35c (65 aa).

Residues 18-50 form a disordered region; that stretch reads SSGKILRHKASKSHLLQKKSSKHRRHLSSTCQV. Over residues 22-44 the composition is skewed to basic residues; that stretch reads ILRHKASKSHLLQKKSSKHRRHL.

This sequence belongs to the bacterial ribosomal protein bL35 family.

The protein resides in the plastid. It is found in the chloroplast. This Porphyra purpurea (Red seaweed) protein is Large ribosomal subunit protein bL35c.